Consider the following 363-residue polypeptide: MTVTGIIAEFNPFHNGHKYLLEQASGLKIIAMSGNFVQRGEPAIVDKWTRAQMALEAGADLVLELPFLVSVQAADFFAKGAVDILERLDIEQLTFGTEEVLDYESISKVYGQKAEQMEAYLAGLPDSLSYPQKTQAMWQEFAGLNFSGSTPNHILGLAYSKAVAVKNIKLCPIQRQGAGYHSLSANQEFASATALRQNLDQPDFLKKFTPVHHLLETAPKVTWSDLFPYLRYQIVTCPDLTSFYQVNQELAVRIREALKSSETIEELVEQVATKRYTKARIRRLLTYILVGARQEEVPSGIHILGFSEQGRQHLSQLKGKVELVSRIGKKPWDSLTQQADKVYQLGNPALKEQNFGRVPVILL.

Residues 7–20, Gly-96, Asn-152, and Arg-175 each bind ATP; that span reads IAEFNPFHNGHKYL.

Belongs to the TmcAL family.

The protein localises to the cytoplasm. The enzyme catalyses cytidine(34) in elongator tRNA(Met) + acetate + ATP = N(4)-acetylcytidine(34) in elongator tRNA(Met) + AMP + diphosphate. Functionally, catalyzes the formation of N(4)-acetylcytidine (ac(4)C) at the wobble position of elongator tRNA(Met), using acetate and ATP as substrates. First activates an acetate ion to form acetyladenylate (Ac-AMP) and then transfers the acetyl group to tRNA to form ac(4)C34. The protein is tRNA(Met) cytidine acetate ligase of Streptococcus gordonii (strain Challis / ATCC 35105 / BCRC 15272 / CH1 / DL1 / V288).